The primary structure comprises 344 residues: uncharacterized protein (344 aa).

Basic and acidic residues predominate over residues lysine 323 to arginine 332. Positions lysine 323–arginine 344 are disordered.

This is an uncharacterized protein from Bacillus anthracis.